Reading from the N-terminus, the 264-residue chain is Thymidylate synthase (264 aa).

Residues arginine 21 and 126–127 (RR) contribute to the dUMP site. Residue cysteine 146 is the Nucleophile of the active site. Residues 166 to 169 (RSAD), asparagine 177, and 207 to 209 (HLY) each bind dUMP. Aspartate 169 provides a ligand contact to (6R)-5,10-methylene-5,6,7,8-tetrahydrofolate. (6R)-5,10-methylene-5,6,7,8-tetrahydrofolate is bound at residue alanine 263.

It belongs to the thymidylate synthase family. Bacterial-type ThyA subfamily. As to quaternary structure, homodimer.

The protein localises to the cytoplasm. The enzyme catalyses dUMP + (6R)-5,10-methylene-5,6,7,8-tetrahydrofolate = 7,8-dihydrofolate + dTMP. It participates in pyrimidine metabolism; dTTP biosynthesis. In terms of biological role, catalyzes the reductive methylation of 2'-deoxyuridine-5'-monophosphate (dUMP) to 2'-deoxythymidine-5'-monophosphate (dTMP) while utilizing 5,10-methylenetetrahydrofolate (mTHF) as the methyl donor and reductant in the reaction, yielding dihydrofolate (DHF) as a by-product. This enzymatic reaction provides an intracellular de novo source of dTMP, an essential precursor for DNA biosynthesis. In Rhodopseudomonas palustris (strain BisB5), this protein is Thymidylate synthase.